The primary structure comprises 366 residues: Phospho-N-acetylmuramoyl-pentapeptide-transferase (366 aa).

Helical transmembrane passes span 27-47, 71-91, 93-113, 134-154, 174-194, 205-225, 245-265, 268-288, 294-314, and 343-363; these read AALFTSALIVFLFGPTIINSL, TPTMGGLMILAGIVGASLLWA, LSNVYVVATLLVTLGFGAIGF, LGIEFVIAGIAVYFMMRTALA, FLINLGIMFVVFGGFVIVGAG, GLAIVPVMIAAASFGVIAYLA, LAVVLGAVIGAGLGFLWFNAP, AIFMGDTGSLALGGTIGTVAV, IVMAIIGGLFVMETLSVIIQV, and QVVIRFWIIAVGLALLGLSTL.

It belongs to the glycosyltransferase 4 family. MraY subfamily. It depends on Mg(2+) as a cofactor.

The protein resides in the cell inner membrane. It carries out the reaction UDP-N-acetyl-alpha-D-muramoyl-L-alanyl-gamma-D-glutamyl-meso-2,6-diaminopimeloyl-D-alanyl-D-alanine + di-trans,octa-cis-undecaprenyl phosphate = di-trans,octa-cis-undecaprenyl diphospho-N-acetyl-alpha-D-muramoyl-L-alanyl-D-glutamyl-meso-2,6-diaminopimeloyl-D-alanyl-D-alanine + UMP. It participates in cell wall biogenesis; peptidoglycan biosynthesis. Its function is as follows. Catalyzes the initial step of the lipid cycle reactions in the biosynthesis of the cell wall peptidoglycan: transfers peptidoglycan precursor phospho-MurNAc-pentapeptide from UDP-MurNAc-pentapeptide onto the lipid carrier undecaprenyl phosphate, yielding undecaprenyl-pyrophosphoryl-MurNAc-pentapeptide, known as lipid I. The sequence is that of Phospho-N-acetylmuramoyl-pentapeptide-transferase from Rhizobium etli (strain ATCC 51251 / DSM 11541 / JCM 21823 / NBRC 15573 / CFN 42).